The chain runs to 423 residues: Glutamate-1-semialdehyde 2,1-aminomutase (423 aa).

N6-(pyridoxal phosphate)lysine is present on K266.

The protein belongs to the class-III pyridoxal-phosphate-dependent aminotransferase family. HemL subfamily. As to quaternary structure, homodimer. It depends on pyridoxal 5'-phosphate as a cofactor.

It localises to the cytoplasm. It carries out the reaction (S)-4-amino-5-oxopentanoate = 5-aminolevulinate. The protein operates within porphyrin-containing compound metabolism; protoporphyrin-IX biosynthesis; 5-aminolevulinate from L-glutamyl-tRNA(Glu): step 2/2. In Nitratidesulfovibrio vulgaris (strain ATCC 29579 / DSM 644 / CCUG 34227 / NCIMB 8303 / VKM B-1760 / Hildenborough) (Desulfovibrio vulgaris), this protein is Glutamate-1-semialdehyde 2,1-aminomutase.